The sequence spans 256 residues: Thiazole synthase (256 aa).

Lys-95 serves as the catalytic Schiff-base intermediate with DXP. 1-deoxy-D-xylulose 5-phosphate is bound by residues Gly-156, Ala-182–Gly-183, and Asn-204–Thr-205.

This sequence belongs to the ThiG family. As to quaternary structure, homotetramer. Forms heterodimers with either ThiH or ThiS.

The protein resides in the cytoplasm. It carries out the reaction [ThiS sulfur-carrier protein]-C-terminal-Gly-aminoethanethioate + 2-iminoacetate + 1-deoxy-D-xylulose 5-phosphate = [ThiS sulfur-carrier protein]-C-terminal Gly-Gly + 2-[(2R,5Z)-2-carboxy-4-methylthiazol-5(2H)-ylidene]ethyl phosphate + 2 H2O + H(+). It participates in cofactor biosynthesis; thiamine diphosphate biosynthesis. Functionally, catalyzes the rearrangement of 1-deoxy-D-xylulose 5-phosphate (DXP) to produce the thiazole phosphate moiety of thiamine. Sulfur is provided by the thiocarboxylate moiety of the carrier protein ThiS. In vitro, sulfur can be provided by H(2)S. This is Thiazole synthase from Vibrio cholerae serotype O1 (strain ATCC 39541 / Classical Ogawa 395 / O395).